The following is a 511-amino-acid chain: TNF receptor-associated factor family protein DDB_G0290931 (511 aa).

The RING-type; degenerate zinc finger occupies 27–67 (CPICFELIYKKSIYQCSSGHYACQECWEKSLEIKQECMICR). Residues 103-169 (IDGANQENED…RKLIKDEENG (67 aa)) adopt a coiled-coil conformation. The disordered stretch occupies residues 107–159 (NQENEDEENEDEENEDDEDENEDEENGEDDEDKDEDEENENENEENKDEENEK). Acidic residues predominate over residues 109–155 (ENEDEENEDEENEDDEDENEDEENGEDDEDKDEDEENENENEENKDE). TRAF-type zinc fingers lie at residues 181-234 (RHIQ…QVQL) and 236-293 (NHYD…SELQ). Positions 324–358 (ELLLKEIEKSKITCSELQRKNDELSSLITEIDDNY) form a coiled coil. One can recognise an MATH domain in the interval 374–499 (GYTNKWIISN…DDKLTINIYV (126 aa)).

Belongs to the TNF receptor-associated factor family. A subfamily.

The protein resides in the cytoplasm. Probable adapter protein and signal transducer that links members of the tumor necrosis factor receptor family to different signaling pathways by association with the receptor cytoplasmic domain and kinases. The polypeptide is TNF receptor-associated factor family protein DDB_G0290931 (Dictyostelium discoideum (Social amoeba)).